Here is a 275-residue protein sequence, read N- to C-terminus: U6 snRNA phosphodiesterase 1 (275 aa).

The interval M1–N25 is disordered. Catalysis depends on H122, which acts as the Proton acceptor. AMP-binding positions include H122 to S124, Y206, and N208 to S214. Residues Y206 and E210–S214 contribute to the UMP site. H212 acts as the Proton donor in catalysis.

It belongs to the 2H phosphoesterase superfamily. USB1 family.

The protein resides in the nucleus. It carries out the reaction a 3'-end uridylyl-uridine-RNA = a 3'-end 2',3'-cyclophospho-uridine-RNA + uridine. Its function is as follows. 3'-5' RNA exonuclease that trims the 3' end of oligo(U) tracts of the pre-U6 small nuclear RNA (snRNA) molecule, leading to the formation of a mature U6 snRNA 3' end-terminated with a 2',3'-cyclic phosphate. Participates in the U6 snRNA 3' end processing that prevents U6 snRNA degradation. The protein is U6 snRNA phosphodiesterase 1 of Dictyostelium discoideum (Social amoeba).